Reading from the N-terminus, the 81-residue chain is ATP synthase subunit c, chloroplastic (81 aa).

2 helical membrane-spanning segments follow: residues 3–23 (PLISSASVIAAGLAVGLASIG) and 57–77 (LAFMEALTIYGLVVALALLFA).

This sequence belongs to the ATPase C chain family. As to quaternary structure, F-type ATPases have 2 components, F(1) - the catalytic core - and F(0) - the membrane proton channel. F(1) has five subunits: alpha(3), beta(3), gamma(1), delta(1), epsilon(1). F(0) has four main subunits: a(1), b(1), b'(1) and c(10-14). The alpha and beta chains form an alternating ring which encloses part of the gamma chain. F(1) is attached to F(0) by a central stalk formed by the gamma and epsilon chains, while a peripheral stalk is formed by the delta, b and b' chains.

Its subcellular location is the plastid. The protein resides in the chloroplast thylakoid membrane. In terms of biological role, f(1)F(0) ATP synthase produces ATP from ADP in the presence of a proton or sodium gradient. F-type ATPases consist of two structural domains, F(1) containing the extramembraneous catalytic core and F(0) containing the membrane proton channel, linked together by a central stalk and a peripheral stalk. During catalysis, ATP synthesis in the catalytic domain of F(1) is coupled via a rotary mechanism of the central stalk subunits to proton translocation. Key component of the F(0) channel; it plays a direct role in translocation across the membrane. A homomeric c-ring of between 10-14 subunits forms the central stalk rotor element with the F(1) delta and epsilon subunits. In Ceratophyllum demersum (Rigid hornwort), this protein is ATP synthase subunit c, chloroplastic.